A 388-amino-acid chain; its full sequence is Succinate--CoA ligase [ADP-forming] subunit beta (388 aa).

One can recognise an ATP-grasp domain in the interval 9–244; that stretch reads KQLFAEYGLP…PSQDDPREAH (236 aa). ATP is bound by residues K46, 53 to 55, E99, T102, and E107; that span reads GRG. 2 residues coordinate Mg(2+): N199 and D213. Residues N264 and 321-323 each bind substrate; that span reads GIV.

It belongs to the succinate/malate CoA ligase beta subunit family. As to quaternary structure, heterotetramer of two alpha and two beta subunits. Requires Mg(2+) as cofactor.

The enzyme catalyses succinate + ATP + CoA = succinyl-CoA + ADP + phosphate. It catalyses the reaction GTP + succinate + CoA = succinyl-CoA + GDP + phosphate. It participates in carbohydrate metabolism; tricarboxylic acid cycle; succinate from succinyl-CoA (ligase route): step 1/1. Functionally, succinyl-CoA synthetase functions in the citric acid cycle (TCA), coupling the hydrolysis of succinyl-CoA to the synthesis of either ATP or GTP and thus represents the only step of substrate-level phosphorylation in the TCA. The beta subunit provides nucleotide specificity of the enzyme and binds the substrate succinate, while the binding sites for coenzyme A and phosphate are found in the alpha subunit. This Pseudomonas fluorescens (strain Pf0-1) protein is Succinate--CoA ligase [ADP-forming] subunit beta.